The following is a 254-amino-acid chain: uncharacterized protein (254 aa).

Belongs to the MtxX family.

This is an uncharacterized protein from Methanopyrus kandleri (strain AV19 / DSM 6324 / JCM 9639 / NBRC 100938).